The sequence spans 541 residues: Chlorophyllide a oxygenase, chloroplastic (541 aa).

The stretch at 114 to 151 (LAREFKSIGTLRKELAELQEELAKAHNQVHLSETRVSS) forms a coiled coil. Over residues 178–192 (AECTSLAPSTSSASR) the composition is skewed to polar residues. Residues 178–208 (AECTSLAPSTSSASRVVNKKPPRRSLNVSGP) form a disordered region. In terms of domain architecture, Rieske spans 220-320 (WYPVAFSSDL…CFEQEGMVWI (101 aa)). The [2Fe-2S] cluster site is built by Cys261, His263, Cys280, and His283. Fe cation contacts are provided by Asp359, Asp363, His366, and His371.

In terms of tissue distribution, expressed in leaves and germinating seedlings, but not in sheaths and roots.

The protein resides in the plastid. Its subcellular location is the chloroplast membrane. The protein localises to the chloroplast thylakoid membrane. The enzyme catalyses chlorophyllide a + 2 NADPH + 2 O2 + 2 H(+) = chlorophyllide b + 2 NADP(+) + 3 H2O. Its function is as follows. Catalyzes a two-step oxygenase reaction involved in the synthesis of chlorophyll b. Acts specifically on the non-esterified chlorophyllide a and not on chlorophyll a. This chain is Chlorophyllide a oxygenase, chloroplastic (CAO), found in Oryza sativa subsp. japonica (Rice).